The primary structure comprises 474 residues: UDP-glycosyltransferase 71E1 (474 aa).

UDP-alpha-D-glucose-binding positions include Ser-275, 341-342 (WA), 359-367 (HCGWNSTLE), and 381-384 (YAEQ).

Belongs to the UDP-glycosyltransferase family.

Functionally, may glycosylate diterpenes or flavonols in leaves. The sequence is that of UDP-glycosyltransferase 71E1 from Stevia rebaudiana (Stevia).